The chain runs to 243 residues: tRNA (guanine-N(1)-)-methyltransferase (243 aa).

S-adenosyl-L-methionine-binding positions include glycine 108 and leucine 127–leucine 132.

The protein belongs to the RNA methyltransferase TrmD family. In terms of assembly, homodimer.

It localises to the cytoplasm. It catalyses the reaction guanosine(37) in tRNA + S-adenosyl-L-methionine = N(1)-methylguanosine(37) in tRNA + S-adenosyl-L-homocysteine + H(+). Specifically methylates guanosine-37 in various tRNAs. The sequence is that of tRNA (guanine-N(1)-)-methyltransferase from Streptococcus pyogenes serotype M5 (strain Manfredo).